Here is a 78-residue protein sequence, read N- to C-terminus: Acyl carrier protein AcpP (78 aa).

The Carrier domain maps to 2 to 77 (SDTAERVKKI…DAVKYIDKAS (76 aa)). S37 carries the O-(pantetheine 4'-phosphoryl)serine modification.

The protein belongs to the acyl carrier protein (ACP) family. Post-translationally, 4'-phosphopantetheine is transferred from CoA to a specific serine of apo-ACP by AcpS. This modification is essential for activity because fatty acids are bound in thioester linkage to the sulfhydryl of the prosthetic group.

Its subcellular location is the cytoplasm. The protein operates within lipid metabolism; fatty acid biosynthesis. In terms of biological role, carrier of the growing fatty acid chain in fatty acid biosynthesis. This Mesorhizobium japonicum (strain LMG 29417 / CECT 9101 / MAFF 303099) (Mesorhizobium loti (strain MAFF 303099)) protein is Acyl carrier protein AcpP.